Consider the following 599-residue polypeptide: Elongation factor 4 (599 aa).

The 183-residue stretch at 5–187 (STIRNFAIIA…AIVHRLPAPV (183 aa)) folds into the tr-type G domain. GTP-binding positions include 17–22 (DHGKST) and 134–137 (NKAD).

It belongs to the TRAFAC class translation factor GTPase superfamily. Classic translation factor GTPase family. LepA subfamily.

Its subcellular location is the cell inner membrane. The enzyme catalyses GTP + H2O = GDP + phosphate + H(+). Functionally, required for accurate and efficient protein synthesis under certain stress conditions. May act as a fidelity factor of the translation reaction, by catalyzing a one-codon backward translocation of tRNAs on improperly translocated ribosomes. Back-translocation proceeds from a post-translocation (POST) complex to a pre-translocation (PRE) complex, thus giving elongation factor G a second chance to translocate the tRNAs correctly. Binds to ribosomes in a GTP-dependent manner. The chain is Elongation factor 4 from Anaplasma marginale (strain Florida).